Here is a 1216-residue protein sequence, read N- to C-terminus: RAB11-binding protein RELCH (1216 aa).

2 disordered regions span residues 1-73 and 135-177; these read MAAM…GLPG and GNFE…QLNR. Position 2 is an N-acetylalanine (alanine 2). Residues serine 20 and serine 22 each carry the phosphoserine modification. Over residues 21-31 the composition is skewed to acidic residues; sequence DSDEDDDEVAA. Position 32 is a phosphothreonine (threonine 32). Residues serine 54 and serine 56 each carry the phosphoserine modification. The span at 148–163 shows a compositional bias: gly residues; it reads GAPGVPGAAGVGGAGG. A phosphoserine mark is found at serine 180 and serine 182. Threonine 183 bears the Phosphothreonine mark. Position 186 is a phosphoserine (serine 186). Residues 197 to 231 adopt a coiled-coil conformation; that stretch reads NRETDEKVAVLEFELRKAKETIQALRANLTKAAEH. Positions 255–287 constitute a LisH domain; sequence EKRALNFLVNEFLLKNNYKLTSITFSDENDDQD. Residues 359–397 adopt a coiled-coil conformation; the sequence is VQKLEDKISLLNSEKWSLMEQIRRLKSEMDFLKNEHFAI. At serine 385 the chain carries Phosphoserine. The segment at 401–477 is disordered; it reads CDSVQPPLDQ…SSLSSKKTVH (77 aa). Positions 411-435 are enriched in basic and acidic residues; the sequence is LPHKDSEDSGQHPDVNSSDKGKNTD. Serine 453 bears the Phosphoserine mark. The interaction with RAB11A and RAB11B stretch occupies residues 497-779; the sequence is CRMSADSRLG…SSKAKLHGEV (283 aa). HEAT repeat units follow at residues 601–639 and 640–679; these read LLPQ…RSSL and VLSM…KYHQ. Phosphoserine is present on serine 792. Residues 1004 to 1042 form an HEAT 3 repeat; sequence VAPALVTLSSDPEFSVRIATIPAFGTIMETVIQRELLER. The residue at position 1149 (serine 1149) is a Phosphoserine.

It is found in the recycling endosome. It localises to the golgi apparatus. Its subcellular location is the trans-Golgi network. Its function is as follows. Regulates intracellular cholesterol distribution from recycling endosomes to the trans-Golgi network through interactions with RAB11 and OSBP. Functions in membrane tethering and promotes OSBP-mediated cholesterol transfer between RAB11-bound recycling endosomes and OSBP-bound Golgi-like membranes. The protein is RAB11-binding protein RELCH of Homo sapiens (Human).